The sequence spans 276 residues: Cruxhalorhodopsin-3 (276 aa).

The propeptide occupies Met1–Gly21. At Glu22–Ser25 the chain is on the extracellular side. Residues Asn26 to Gly51 form a helical membrane-spanning segment. The Cytoplasmic portion of the chain corresponds to Arg52–Ser57. A helical membrane pass occupies residues Arg58 to Ala81. Over Ser82–Pro105 the chain is Extracellular. Residues Trp106–Ala127 traverse the membrane as a helical segment. Residues Asp128 to Asp130 are Cytoplasmic-facing. Residues Met131 to Val154 traverse the membrane as a helical segment. Residues Thr155–Ser157 lie on the Extracellular side of the membrane. Residues His158–Leu180 form a helical membrane-spanning segment. At Val181–Thr192 the chain is on the cytoplasmic side. A helical transmembrane segment spans residues Ser193–Leu216. The Extracellular segment spans residues Gly217–Ser225. A helical membrane pass occupies residues Val226 to Ala254. Lys241 is modified (N6-(retinylidene)lysine). Residues Asn255–Asp276 lie on the Cytoplasmic side of the membrane.

This sequence belongs to the archaeal/bacterial/fungal opsin family.

The protein localises to the cell membrane. Functionally, light-driven chloride pump. The protein is Cruxhalorhodopsin-3 (choP3) of Haloarcula vallismortis (Halobacterium vallismortis).